The chain runs to 252 residues: Imidazole glycerol phosphate synthase subunit HisF (252 aa).

Catalysis depends on residues Asp-11 and Asp-130.

It belongs to the HisA/HisF family. In terms of assembly, heterodimer of HisH and HisF.

Its subcellular location is the cytoplasm. It catalyses the reaction 5-[(5-phospho-1-deoxy-D-ribulos-1-ylimino)methylamino]-1-(5-phospho-beta-D-ribosyl)imidazole-4-carboxamide + L-glutamine = D-erythro-1-(imidazol-4-yl)glycerol 3-phosphate + 5-amino-1-(5-phospho-beta-D-ribosyl)imidazole-4-carboxamide + L-glutamate + H(+). Its pathway is amino-acid biosynthesis; L-histidine biosynthesis; L-histidine from 5-phospho-alpha-D-ribose 1-diphosphate: step 5/9. Its function is as follows. IGPS catalyzes the conversion of PRFAR and glutamine to IGP, AICAR and glutamate. The HisF subunit catalyzes the cyclization activity that produces IGP and AICAR from PRFAR using the ammonia provided by the HisH subunit. The polypeptide is Imidazole glycerol phosphate synthase subunit HisF (Staphylococcus aureus (strain bovine RF122 / ET3-1)).